The primary structure comprises 662 residues: Methyl-accepting chemotaxis protein TlpB (662 aa).

Topologically, residues Met-1–Pro-16 are cytoplasmic. A helical membrane pass occupies residues Leu-17 to Tyr-37. Topologically, residues Gln-38–Asn-281 are extracellular. Positions Ser-153–Trp-228 constitute a Cache domain. A helical transmembrane segment spans residues Thr-282–Ile-302. The HAMP domain occupies Arg-303 to Gly-355. Residues Arg-303–Ser-662 are Cytoplasmic-facing. A Glutamate methyl ester (Glu) modification is found at Glu-370. In terms of domain architecture, Methyl-accepting transducer spans Ser-374 to Ser-610. Gln-594 carries the glutamate methyl ester (Gln) modification. 2 positions are modified to glutamate methyl ester (Glu): Glu-629 and Glu-636.

It belongs to the methyl-accepting chemotaxis (MCP) protein family.

The protein resides in the cell membrane. Its function is as follows. Chemotactic-signal transducers respond to changes in the concentration of attractants and repellents in the environment, transduce a signal from the outside to the inside of the cell, and facilitate sensory adaptation through the variation of the level of methylation. All amino acids serve as attractants in B.subtilis, they appear to cause an increase in the turnover methyl groups, leading to methylation of an unidentified acceptor, while repellents have been shown to cause a decrease in methyl group turnover. The methyl groups are added by a methyltransferase and removed by a methylesterase. The sequence is that of Methyl-accepting chemotaxis protein TlpB (tlpB) from Bacillus subtilis (strain 168).